Reading from the N-terminus, the 191-residue chain is MAAPRGRAAPWTTALLLLLTSQILSPGSCADEEEVPEEWVLLHVVQGQIGAGNYSYLRLNHEGKIVLRMRSLKGDADLYVSASSLHPSFDDYELQSATCGPDAVSIPAHFRRPVGIGVYGHPSHLESEFEMKVYYDGTVEQHPFGEAAYPADGADAGQKHARAPEDASQEEESVLWTILISVLKLVLEILF.

Positions 1–30 (MAAPRGRAAPWTTALLLLLTSQILSPGSCA) are cleaved as a signal peptide. Asn-53 carries an N-linked (GlcNAc...) asparagine glycan.

This sequence belongs to the UPF0669 family.

The protein resides in the secreted. In terms of biological role, may be involved in induction of apoptosis in CD4(+) T-cells, but not CD8(+) T-cells or hepatocytes. The polypeptide is UPF0669 protein C6orf120 homolog (Macaca fascicularis (Crab-eating macaque)).